We begin with the raw amino-acid sequence, 316 residues long: UDP-N-acetylglucosamine transporter yea4 (316 aa).

Over 1–3 (MIA) the chain is Cytoplasmic. A helical membrane pass occupies residues 4-24 (SALSFIFGGCCSNAYALEALV). Residues 25-31 (REFPSSG) lie on the Lumenal side of the membrane. Residues 32-52 (ILITFSQFILITIEGLIYFLL) form a helical membrane-spanning segment. The Cytoplasmic portion of the chain corresponds to 53–67 (NDVQSLKHPKVPRKR). The helical transmembrane segment at 68-88 (WFVVVVMFFAINVLNNVALGF) threads the bilayer. The Lumenal segment spans residues 89-120 (DISVPVHIILRSSGPLTTMAVGRILAGKRYSS). Residues 121 to 141 (LQIGSVFILTIGVIIATLGNA) form a helical membrane-spanning segment. Topologically, residues 142–153 (KDLHLHVESMTR) are cytoplasmic. The chain crosses the membrane as a helical span at residues 154-174 (FGIGFTILVITQILGAIMGLV). Topologically, residues 175–187 (LENTYRIYGSDWR) are lumenal. The chain crosses the membrane as a helical span at residues 188–208 (ESLFYTHALSLPFFLFLLRPI). The Cytoplasmic segment spans residues 209–214 (RSQWND). The chain crosses the membrane as a helical span at residues 215-235 (LFAIHTKGFLNLPSGVWYLCF). Topologically, residues 236-274 (NTLAQYFCVRGVNALGAETSALTVSVVLNVRKFVSLCLS) are lumenal. The helical transmembrane segment at 275 to 295 (LILFENEMGPAVKFGALLVFG) threads the bilayer. Over 296-316 (SSAVYASARSKPKTNGLKKND) the chain is Cytoplasmic.

The protein belongs to the nucleotide-sugar transporter family. SLC35B subfamily.

The protein localises to the endoplasmic reticulum. The protein resides in the endoplasmic reticulum membrane. In terms of biological role, sugar transporter that specifically mediates the transport of UDP-N-acetylglucosamine (UDP-GlcNAc) and is required for cell wall chitin synthesis. This Schizosaccharomyces pombe (strain 972 / ATCC 24843) (Fission yeast) protein is UDP-N-acetylglucosamine transporter yea4 (yea4).